The chain runs to 464 residues: Cysteine--tRNA ligase 1 (464 aa).

Cysteine 28 serves as a coordination point for Zn(2+). Positions 30 to 40 (VTIYDLCHIGH) match the 'HIGH' region motif. Zn(2+)-binding residues include cysteine 209, histidine 234, and glutamate 238. The 'KMSKS' region motif lies at 266–270 (KMSKS). Position 269 (lysine 269) interacts with ATP.

This sequence belongs to the class-I aminoacyl-tRNA synthetase family. As to quaternary structure, monomer. The cofactor is Zn(2+).

The protein localises to the cytoplasm. It carries out the reaction tRNA(Cys) + L-cysteine + ATP = L-cysteinyl-tRNA(Cys) + AMP + diphosphate. The chain is Cysteine--tRNA ligase 1 from Photobacterium profundum (strain SS9).